We begin with the raw amino-acid sequence, 248 residues long: DNA repair protein RecO (248 aa).

The protein belongs to the RecO family.

Functionally, involved in DNA repair and RecF pathway recombination. The chain is DNA repair protein RecO from Bacillus cereus (strain 03BB102).